A 235-amino-acid chain; its full sequence is 2-C-methyl-D-erythritol 4-phosphate cytidylyltransferase (235 aa).

Belongs to the IspD/TarI cytidylyltransferase family. IspD subfamily.

It catalyses the reaction 2-C-methyl-D-erythritol 4-phosphate + CTP + H(+) = 4-CDP-2-C-methyl-D-erythritol + diphosphate. It functions in the pathway isoprenoid biosynthesis; isopentenyl diphosphate biosynthesis via DXP pathway; isopentenyl diphosphate from 1-deoxy-D-xylulose 5-phosphate: step 2/6. Its function is as follows. Catalyzes the formation of 4-diphosphocytidyl-2-C-methyl-D-erythritol from CTP and 2-C-methyl-D-erythritol 4-phosphate (MEP). The chain is 2-C-methyl-D-erythritol 4-phosphate cytidylyltransferase from Pseudomonas fluorescens (strain Pf0-1).